Consider the following 517-residue polypeptide: Intermediate filament family orphan 2 (517 aa).

The IF rod domain maps to 53–484 (NIHLLKGLNV…RLIKGSADRN (432 aa)). Disordered stretches follow at residues 104–129 (EQAV…SSGA), 330–349 (KVAS…RFSD), and 478–517 (KGSA…PMVS). Positions 485-497 (SPSPSSVASSDSG) are enriched in low complexity. Residues 501–517 (EIQDEFEREADVEPMVS) are compositionally biased toward acidic residues.

It belongs to the intermediate filament family.

The polypeptide is Intermediate filament family orphan 2 (IFFO2) (Homo sapiens (Human)).